The sequence spans 107 residues: Somatoliberin (107 aa).

The first 19 residues, 1 to 19 (MPLWVFFVILTLTNGSHCS), serve as a signal peptide directing secretion. Positions 20–30 (PSPSLPFRIRR) are excised as a propeptide. Leu74 bears the Leucine amide mark. Residues 77–107 (QVDSMWADHRQMSLESLLAALLQKHSRDSQG) constitute a propeptide that is removed on maturation.

The protein belongs to the glucagon family.

It localises to the secreted. Its function is as follows. GRF is released by the hypothalamus and acts on the adenohypophyse to stimulate the secretion of growth hormone. The sequence is that of Somatoliberin (GHRH) from Mesocricetus auratus (Golden hamster).